A 123-amino-acid polypeptide reads, in one-letter code: Large ribosomal subunit protein bL12 (123 aa).

It belongs to the bacterial ribosomal protein bL12 family. In terms of assembly, homodimer. Part of the ribosomal stalk of the 50S ribosomal subunit. Forms a multimeric L10(L12)X complex, where L10 forms an elongated spine to which 2 to 4 L12 dimers bind in a sequential fashion. Binds GTP-bound translation factors.

Forms part of the ribosomal stalk which helps the ribosome interact with GTP-bound translation factors. Is thus essential for accurate translation. The chain is Large ribosomal subunit protein bL12 from Neisseria perflava.